The primary structure comprises 201 residues: LexA repressor 1 (201 aa).

The segment at residues 28 to 48 (LREIAAHLKISGTLGVSKHLE) is a DNA-binding region (H-T-H motif). Catalysis depends on for autocatalytic cleavage activity residues serine 120 and lysine 157.

The protein belongs to the peptidase S24 family. Homodimer.

It catalyses the reaction Hydrolysis of Ala-|-Gly bond in repressor LexA.. Its function is as follows. Represses a number of genes involved in the response to DNA damage (SOS response), including recA and lexA. In the presence of single-stranded DNA, RecA interacts with LexA causing an autocatalytic cleavage which disrupts the DNA-binding part of LexA, leading to derepression of the SOS regulon and eventually DNA repair. This is LexA repressor 1 from Geobacter sulfurreducens (strain ATCC 51573 / DSM 12127 / PCA).